The following is a 226-amino-acid chain: ATP synthase subunit a (226 aa).

5 consecutive transmembrane segments (helical) span residues 20–40 (LNWFSTFIGLLIIPSTFWLMP), 74–94 (FVSLFSLIMFNNFLGLFPYIF), 100–120 (LTLTLTLAFPLWLSFMLYGWI), 162–182 (LTANMIAGHLLMTLLGNTGPM), and 187–207 (IILSMILITQIALLVLESAVA).

It belongs to the ATPase A chain family. F-type ATPases have 2 components, CF(1) - the catalytic core - and CF(0) - the membrane proton channel. CF(1) has five subunits: alpha(3), beta(3), gamma(1), delta(1), epsilon(1). CF(0) has three main subunits: a, b and c.

The protein resides in the mitochondrion inner membrane. In terms of biological role, mitochondrial membrane ATP synthase (F(1)F(0) ATP synthase or Complex V) produces ATP from ADP in the presence of a proton gradient across the membrane which is generated by electron transport complexes of the respiratory chain. F-type ATPases consist of two structural domains, F(1) - containing the extramembraneous catalytic core and F(0) - containing the membrane proton channel, linked together by a central stalk and a peripheral stalk. During catalysis, ATP synthesis in the catalytic domain of F(1) is coupled via a rotary mechanism of the central stalk subunits to proton translocation. Key component of the proton channel; it may play a direct role in the translocation of protons across the membrane. The protein is ATP synthase subunit a (mt:ATPase6) of Aedes albopictus (Asian tiger mosquito).